We begin with the raw amino-acid sequence, 184 residues long: Large ribosomal subunit protein uL5 (184 aa).

It belongs to the universal ribosomal protein uL5 family. Part of the 50S ribosomal subunit; part of the 5S rRNA/L5/L18/L25 subcomplex. Contacts the 5S rRNA and the P site tRNA. Forms a bridge to the 30S subunit in the 70S ribosome.

This is one of the proteins that bind and probably mediate the attachment of the 5S RNA into the large ribosomal subunit, where it forms part of the central protuberance. In the 70S ribosome it contacts protein S13 of the 30S subunit (bridge B1b), connecting the 2 subunits; this bridge is implicated in subunit movement. Contacts the P site tRNA; the 5S rRNA and some of its associated proteins might help stabilize positioning of ribosome-bound tRNAs. This Thermotoga sp. (strain RQ2) protein is Large ribosomal subunit protein uL5.